Consider the following 435-residue polypeptide: T-box transcription factor T (435 aa).

The segment at residues 51–219 (LWLRFKELTN…YNPFAKAFLD (169 aa)) is a DNA-binding region (T-box). 2 disordered regions span residues 280-310 (PALRNHRPSPYPSPYAHRNNSPTYSDNPSAC) and 384-412 (APLGHAVPAPSASGSPLYEGAPTATDVPD). Positions 297–310 (RNNSPTYSDNPSAC) are enriched in polar residues.

In terms of assembly, monomer. Binds DNA as a monomer.

It localises to the nucleus. Its function is as follows. Involved in the transcriptional regulation of genes required for mesoderm formation and differentiation. Binds to a palindromic site (called T site) and activates gene transcription when bound to such a site. This Canis lupus familiaris (Dog) protein is T-box transcription factor T.